The following is a 361-amino-acid chain: Chorismate synthase (361 aa).

NADP(+) is bound by residues Arg-48 and Arg-54. FMN contacts are provided by residues 125–127 (RSS), 238–239 (NA), Gly-278, 293–297 (KPTSS), and Arg-319.

Belongs to the chorismate synthase family. In terms of assembly, homotetramer. FMNH2 serves as cofactor.

The catalysed reaction is 5-O-(1-carboxyvinyl)-3-phosphoshikimate = chorismate + phosphate. It functions in the pathway metabolic intermediate biosynthesis; chorismate biosynthesis; chorismate from D-erythrose 4-phosphate and phosphoenolpyruvate: step 7/7. Functionally, catalyzes the anti-1,4-elimination of the C-3 phosphate and the C-6 proR hydrogen from 5-enolpyruvylshikimate-3-phosphate (EPSP) to yield chorismate, which is the branch point compound that serves as the starting substrate for the three terminal pathways of aromatic amino acid biosynthesis. This reaction introduces a second double bond into the aromatic ring system. The chain is Chorismate synthase from Klebsiella pneumoniae subsp. pneumoniae (strain ATCC 700721 / MGH 78578).